Here is a 430-residue protein sequence, read N- to C-terminus: Asparagine--tRNA ligase (430 aa).

It belongs to the class-II aminoacyl-tRNA synthetase family. In terms of assembly, homodimer.

The protein localises to the cytoplasm. The enzyme catalyses tRNA(Asn) + L-asparagine + ATP = L-asparaginyl-tRNA(Asn) + AMP + diphosphate + H(+). The chain is Asparagine--tRNA ligase from Pelotomaculum thermopropionicum (strain DSM 13744 / JCM 10971 / SI).